The chain runs to 285 residues: Undecaprenyl-diphosphatase (285 aa).

7 consecutive transmembrane segments (helical) span residues 40–60 (GPLI…VYFF), 89–109 (LFWW…AIKL), 137–157 (DLIA…DWLG), 171–191 (GLIV…RSGV), 209–229 (FSFL…VPEI), 241–261 (LIAG…LMNF), and 265–285 (ASML…LAFF).

It belongs to the UppP family.

It localises to the cell inner membrane. It carries out the reaction di-trans,octa-cis-undecaprenyl diphosphate + H2O = di-trans,octa-cis-undecaprenyl phosphate + phosphate + H(+). Its function is as follows. Catalyzes the dephosphorylation of undecaprenyl diphosphate (UPP). Confers resistance to bacitracin. The sequence is that of Undecaprenyl-diphosphatase from Erythrobacter litoralis (strain HTCC2594).